The sequence spans 623 residues: MPAVYGSRLTTFEDSEKESEYGYVRKVSGPVVVADGMAGAAMYELVRVGHDNLIGEIIRLEGDSATIQVYEETAGLMVNDPVLRTHKPLSVELGPGILGNIFDGIQRPLKTIAKRSGDVYIPRGVSVPALDKDALWDFQPKKIGEGDLLTGGDLYATVFENSLMQHHVALPPDAMGKITYIAPPGQYSLKDTVLELEFQGVKKQFTMLQTWPVRTPRPVATKLAADTPLLTGQRVLDALFPSVLGGTCAIPGAFGCGKTVISQALSKYSNSDAVVYVGCGERGNEMAEVLMDFPQLTMTLPDGREESVMKRTTLVANTSNMPVAAREASIYTGITIAEYFRDMGYNVSMMADSTSRWAEALREISGRLAEMPADSGYPAYLAARLASFYERAGKVKCLGGPERTGSVTIVGAVSPPGGDFSDPVTSATLSIVQVFWGLDKKLAQRKHFPSVNWLISYSKYSGALESFYEKFDPDFISIRTKAREVLQREDDLNEIVQLVGKDALAETDKITLETAKLLREDYLAQNAFTPYDKFCPFYKSVWMMRNIVHFNALANQAVEKAAGMDGQKITYSLIKHRLGDLFYRLVSQKFEDPAEGEEALVAKFKKLNEDLTAGFRALEDETR.

252–259 (GAFGCGKT) provides a ligand contact to ATP.

This sequence belongs to the ATPase alpha/beta chains family. As to quaternary structure, V-ATPase is a heteromultimeric enzyme composed of a peripheral catalytic V1 complex (main components: subunits A, B, C, D, E, and F) attached to an integral membrane V0 proton pore complex (main component: the proteolipid protein).

The catalysed reaction is ATP + H2O + 4 H(+)(in) = ADP + phosphate + 5 H(+)(out). In terms of biological role, catalytic subunit of the peripheral V1 complex of vacuolar ATPase. V-ATPase vacuolar ATPase is responsible for acidifying a variety of intracellular compartments in eukaryotic cells. This is V-type proton ATPase catalytic subunit A (CVA69.24) from Gossypium hirsutum (Upland cotton).